The following is a 232-amino-acid chain: 5'-methylthioadenosine/S-adenosylhomocysteine nucleosidase (232 aa).

The Proton acceptor role is filled by E12. Substrate contacts are provided by residues G78, I152, and 173 to 174 (ME). The active-site Proton donor is the D197.

It belongs to the PNP/UDP phosphorylase family. MtnN subfamily. As to quaternary structure, homodimer.

The enzyme catalyses S-adenosyl-L-homocysteine + H2O = S-(5-deoxy-D-ribos-5-yl)-L-homocysteine + adenine. The catalysed reaction is S-methyl-5'-thioadenosine + H2O = 5-(methylsulfanyl)-D-ribose + adenine. It catalyses the reaction 5'-deoxyadenosine + H2O = 5-deoxy-D-ribose + adenine. It participates in amino-acid biosynthesis; L-methionine biosynthesis via salvage pathway; S-methyl-5-thio-alpha-D-ribose 1-phosphate from S-methyl-5'-thioadenosine (hydrolase route): step 1/2. Its function is as follows. Catalyzes the irreversible cleavage of the glycosidic bond in both 5'-methylthioadenosine (MTA) and S-adenosylhomocysteine (SAH/AdoHcy) to adenine and the corresponding thioribose, 5'-methylthioribose and S-ribosylhomocysteine, respectively. Also cleaves 5'-deoxyadenosine, a toxic by-product of radical S-adenosylmethionine (SAM) enzymes, into 5-deoxyribose and adenine. Thus, is required for in vivo function of the radical SAM enzymes biotin synthase and lipoic acid synthase, that are inhibited by 5'-deoxyadenosine accumulation. This chain is 5'-methylthioadenosine/S-adenosylhomocysteine nucleosidase, found in Escherichia coli O9:H4 (strain HS).